The chain runs to 536 residues: Membrane protein insertase YidC (536 aa).

A run of 5 helical transmembrane segments spans residues 7–27 (FFIF…QSQS), 338–358 (LLST…LITF), 419–439 (LPVF…IGSV), 453–473 (LSDQ…MFFI), and 494–514 (PFIF…YYIV).

Belongs to the OXA1/ALB3/YidC family. Type 1 subfamily. In terms of assembly, interacts with the Sec translocase complex via SecD. Specifically interacts with transmembrane segments of nascent integral membrane proteins during membrane integration.

The protein localises to the cell membrane. Its function is as follows. Required for the insertion and/or proper folding and/or complex formation of integral membrane proteins into the membrane. Involved in integration of membrane proteins that insert both dependently and independently of the Sec translocase complex, as well as at least some lipoproteins. Aids folding of multispanning membrane proteins. This is Membrane protein insertase YidC from Buchnera aphidicola subsp. Schizaphis graminum (strain Sg).